Consider the following 199-residue polypeptide: V-set and transmembrane domain-containing protein 5 (199 aa).

A signal peptide spans 1–27 (MRPPRCVGRTQGIPLGLLAFWVATARC). Residues 28–146 (LQSQGVSLYI…VSEIRYEDLH (119 aa)) lie on the Extracellular side of the membrane. Positions 36–138 (YIPRSAINAT…QSGTILLHVS (103 aa)) constitute an Ig-like C2-type domain. N-linked (GlcNAc...) asparagine glycans are attached at residues asparagine 43, asparagine 87, and asparagine 101. The chain crosses the membrane as a helical span at residues 147-167 (FVAVFFALLAAVAVVLISLMW). At 168–199 (VCNQCAYKFQRKRRYKLRESTTEEIEMKDVEC) the chain is on the cytoplasmic side. Residues 169–185 (CNQCAYKFQRKRRYKLR) are important for CDC42-dependent filopodia induction.

In terms of assembly, can homooligomerize through cis interactions within the same cell membrane. In terms of processing, N-glycosylated.

The protein localises to the cell membrane. It localises to the cell projection. The protein resides in the dendrite. It is found in the axon. Functionally, cell adhesion-like membrane protein of the central nervous system (CNS) which modulates both the position and complexity of central neurons by altering their membrane morphology and dynamics. Involved in the formation of neuronal dendrites and protrusions including dendritic filopodia. In synaptogenesis, regulates synapse formation by altering dendritic spine morphology and actin distribution. Promotes formation of unstable neuronal spines such as thin and branched types. Regulates neuronal morphogenesis and migration during cortical development in the brain. In Rattus norvegicus (Rat), this protein is V-set and transmembrane domain-containing protein 5 (Vstm5).